Reading from the N-terminus, the 457-residue chain is MAREGFFTGLDIGTSSVKVLVAEQRNGELNVIGVSNAKSKGVKDGIIVDIDAAATAIKSAISQAEEKAGISIKSVNVGLPGNLLQVEPTQGMIPVTSDTKEITDQDVENVVKSALTKSMTPDREVITFIPEEFIVDGFQGIRDPRGMMGVRLEMRGLLYTGPRTILHNLRKTVERAGVQVENVIISPLAMVQSVLNEGEREFGATVIDMGAGQTTVATIRNQELQFTHILQEGGDYVTKDISKVLKTSRKLAEGLKLNYGEAYPPLASKETFQVEVIGEVEAVEVTEAYLSEIISARIKHILEQIKQELDRRRLLDLPGGIVLIGGNAILPGMVELAQEVFGVRVKLYVPNQVGIRNPAFAHVISLSEFAGQLTEVNLLAQGAIKGENDLSHQPISFGGMLQKTAQFVQSTPVQPAPAPEVEPVAPTEPMADFQQASQNKPKLADRFRGLIGSMFDE.

It belongs to the FtsA/MreB family. In terms of assembly, self-interacts. Interacts with FtsZ.

Its subcellular location is the cell membrane. In terms of biological role, cell division protein that is involved in the assembly of the Z ring. May serve as a membrane anchor for the Z ring. Increased expression restores growth to a PBP2b (penA) deletion strain as well as mreCD and rodA deletions, but not gpsB or rodZ deletions. Does not restore wild-type cell morphology to the penA deletion. This is Cell division protein FtsA from Streptococcus pneumoniae serotype 2 (strain D39 / NCTC 7466).